The sequence spans 278 residues: uncharacterized protein (278 aa).

The first 20 residues, 1 to 20 (MSPLIVGTLIIILLSGLATA), serve as a signal peptide directing secretion. Glycine 96 carries GPI-anchor amidated glycine lipidation. Positions 97-278 (TFLTSPTAKR…QLIMQTFNGS (182 aa)) are cleaved as a propeptide — removed in mature form.

The protein resides in the cell membrane. This is an uncharacterized protein from Schizosaccharomyces pombe (strain 972 / ATCC 24843) (Fission yeast).